The chain runs to 238 residues: Endo-chitosanase (238 aa).

Residues 1–17 form the signal peptide; sequence MRLSEILTVALVTGATA. The N-linked (GlcNAc...) asparagine glycan is linked to N83.

This sequence belongs to the glycosyl hydrolase 75 family.

It localises to the secreted. The catalysed reaction is Endohydrolysis of beta-(1-&gt;4)-linkages between D-glucosamine residues in a partly acetylated chitosan.. In terms of biological role, chitosanase catalyzing the endo-type cleavage of chitosan, the deacylated form of chitin. Chitosanase may be crucial in the degradation of the deacetylated portion of chitin in the fungal cell wall. Chitoolisaccharides produced by the hydrolysis of partially N-acetylated chitosan are known to have many biological activities, including antibacterial activity, immune-enhancing effects, and elicitor activity. The chitosans with higher degrees of deacetylation were shown to be the better substrates. Chitodimer, chitotrimer, and chitotetramer are the major products but monoacetyl chitodimer, monoacetyl chitotrimer, and monoacetyl chitotetramer are also produced. The polypeptide is Endo-chitosanase (csn) (Aspergillus fumigatus (Neosartorya fumigata)).